Consider the following 790-residue polypeptide: Sorting nexin mvp1 (790 aa).

Polar residues-rich tracts occupy residues Met-1–Asn-10 and Lys-20–Gly-40. Disordered stretches follow at residues Met-1 to Arg-62, Pro-215 to Asn-342, and Ala-373 to Ser-406. A compositionally biased stretch (pro residues) spans Pro-225 to Pro-240. Residues Lys-241–Thr-252 show a composition bias toward low complexity. The segment covering Asp-269–Thr-283 has biased composition (basic and acidic residues). Over residues Asn-297–Ala-319 the composition is skewed to polar residues. Low complexity-rich tracts occupy residues Thr-324 to Ser-339 and Gln-386 to Ser-400. Positions Glu-411–Leu-525 constitute a PX domain. A 1,2-diacyl-sn-glycero-3-phospho-(1D-myo-inositol-3-phosphate) is bound by residues Arg-447, Ser-449, Lys-473, and Arg-492.

Belongs to the sorting nexin family.

The protein resides in the cytoplasm. Its subcellular location is the membrane. Required for vacuolar protein sorting. This is Sorting nexin mvp1 (vsp-1) from Neurospora crassa (strain ATCC 24698 / 74-OR23-1A / CBS 708.71 / DSM 1257 / FGSC 987).